The primary structure comprises 471 residues: Arginine biosynthesis bifunctional protein ArgJ, mitochondrial (471 aa).

Residues 1 to 33 (MAMAGCNGFFLHQLRQPRLQLARQLGRTPSRAY) constitute a mitochondrion transit peptide. Residues Thr201, Lys230, Thr241, Glu327, Asn466, and Thr471 each contribute to the substrate site. Residue Thr241 is the Nucleophile of the active site.

It belongs to the ArgJ family. Heterodimer of an alpha and a beta chain. In terms of processing, the alpha and beta chains are autoproteolytically processed from a single precursor protein within the mitochondrion.

The protein localises to the mitochondrion matrix. It catalyses the reaction N(2)-acetyl-L-ornithine + L-glutamate = N-acetyl-L-glutamate + L-ornithine. The catalysed reaction is L-glutamate + acetyl-CoA = N-acetyl-L-glutamate + CoA + H(+). The protein operates within amino-acid biosynthesis; L-arginine biosynthesis; L-ornithine and N-acetyl-L-glutamate from L-glutamate and N(2)-acetyl-L-ornithine (cyclic): step 1/1. Its pathway is amino-acid biosynthesis; L-arginine biosynthesis; N(2)-acetyl-L-ornithine from L-glutamate: step 1/4. Its function is as follows. Catalyzes two activities which are involved in the cyclic version of arginine biosynthesis: the synthesis of acetylglutamate from glutamate and acetyl-CoA, and of ornithine by transacetylation between acetylornithine and glutamate. The chain is Arginine biosynthesis bifunctional protein ArgJ, mitochondrial from Chaetomium globosum (strain ATCC 6205 / CBS 148.51 / DSM 1962 / NBRC 6347 / NRRL 1970) (Soil fungus).